The primary structure comprises 956 residues: Lon protease homolog, mitochondrial 1 (956 aa).

Disordered regions lie at residues 37 to 57 (NNNN…NNNN) and 83 to 123 (KKKG…GNEK). A compositionally biased stretch (basic and acidic residues) spans 91–123 (NNDDNDNEKNEKNEKKVKNEKKEKNEKNDGNEK). The 199-residue stretch at 159 to 357 (VVIYPSNSVN…MLYHMILNEQ (199 aa)) folds into the Lon N-terminal domain. 511-518 (GPPGTGKT) serves as a coordination point for ATP. The Lon proteolytic domain maps to 747–945 (VTPIGVVNGL…KDVFEVAFPN (199 aa)). Over residues 777–795 (KPLSSLPPSQQQQNQLEPS) the composition is skewed to low complexity. Residues 777–800 (KPLSSLPPSQQQQNQLEPSIKTTG) form a disordered region. Active-site residues include Ser-851 and Lys-894.

This sequence belongs to the peptidase S16 family. As to quaternary structure, homohexamer or homoheptamer. Organized in a ring with a central cavity.

It is found in the mitochondrion matrix. The catalysed reaction is Hydrolysis of proteins in presence of ATP.. Functionally, ATP-dependent serine protease that mediates the selective degradation of misfolded, unassembled or oxidatively damaged polypeptides as well as certain short-lived regulatory proteins in the mitochondrial matrix. May also have a chaperone function in the assembly of inner membrane protein complexes. Participates in the regulation of mitochondrial gene expression and in the maintenance of the integrity of the mitochondrial genome. Binds to mitochondrial DNA in a site-specific manner. The polypeptide is Lon protease homolog, mitochondrial 1 (Dictyostelium discoideum (Social amoeba)).